A 164-amino-acid chain; its full sequence is 3-isopropylmalate dehydratase small subunit 1 (164 aa).

The protein belongs to the LeuD family. LeuD type 2 subfamily. As to quaternary structure, heterodimer of LeuC and LeuD.

It carries out the reaction (2R,3S)-3-isopropylmalate = (2S)-2-isopropylmalate. Its pathway is amino-acid biosynthesis; L-leucine biosynthesis; L-leucine from 3-methyl-2-oxobutanoate: step 2/4. In terms of biological role, catalyzes the isomerization between 2-isopropylmalate and 3-isopropylmalate, via the formation of 2-isopropylmaleate. The polypeptide is 3-isopropylmalate dehydratase small subunit 1 (leuD1) (Pyrococcus abyssi (strain GE5 / Orsay)).